The chain runs to 185 residues: Ribosome-recycling factor (185 aa).

The protein belongs to the RRF family.

The protein resides in the cytoplasm. Functionally, responsible for the release of ribosomes from messenger RNA at the termination of protein biosynthesis. May increase the efficiency of translation by recycling ribosomes from one round of translation to another. This is Ribosome-recycling factor from Saccharopolyspora erythraea (strain ATCC 11635 / DSM 40517 / JCM 4748 / NBRC 13426 / NCIMB 8594 / NRRL 2338).